The sequence spans 86 residues: Small ribosomal subunit protein bS16 (86 aa).

The protein belongs to the bacterial ribosomal protein bS16 family.

This Xylella fastidiosa (strain M12) protein is Small ribosomal subunit protein bS16.